The primary structure comprises 228 residues: Phosphoglycolate phosphatase 1 (228 aa).

The active-site Nucleophile is the aspartate 8. Positions 8 and 10 each coordinate Mg(2+). Lysine 149 contacts substrate. Mg(2+)-binding residues include aspartate 172 and aspartate 176.

The protein belongs to the archaeal SPP-like hydrolase family. Requires Mg(2+) as cofactor.

It catalyses the reaction 2-phosphoglycolate + H2O = glycolate + phosphate. Functionally, catalyzes the dephosphorylation of 2-phosphoglycolate. In Saccharolobus solfataricus (strain ATCC 35092 / DSM 1617 / JCM 11322 / P2) (Sulfolobus solfataricus), this protein is Phosphoglycolate phosphatase 1.